The primary structure comprises 190 residues: Glutamyl-tRNA(Gln) amidotransferase subunit C, mitochondrial (190 aa).

A mitochondrion-targeting transit peptide spans 1 to 96 (MISFQIILQQ…VLNLKQAVRF (96 aa)). The tract at residues 28–57 (KSNSTAVGSSDEDDEIYVPKKPIPSPIDQS) is disordered.

This sequence belongs to the GatC family. Subunit of the heterotrimeric GatCAB amidotransferase (AdT) complex, composed of A, B and C subunits.

The protein localises to the mitochondrion. It carries out the reaction L-glutamyl-tRNA(Gln) + L-glutamine + ATP + H2O = L-glutaminyl-tRNA(Gln) + L-glutamate + ADP + phosphate + H(+). Functionally, allows the formation of correctly charged Gln-tRNA(Gln) through the transamidation of misacylated Glu-tRNA(Gln) in the mitochondria. The reaction takes place in the presence of glutamine and ATP through an activated gamma-phospho-Glu-tRNA(Gln). The polypeptide is Glutamyl-tRNA(Gln) amidotransferase subunit C, mitochondrial (Loa loa (Eye worm)).